The following is a 192-amino-acid chain: Lipid A acyltransferase PagP (192 aa).

The signal sequence occupies residues Met-1 to Ala-29. Active-site residues include His-64, Asp-107, and Ser-108.

Belongs to the lipid A palmitoyltransferase family. In terms of assembly, homodimer.

It is found in the cell outer membrane. The catalysed reaction is a lipid A + a 1,2-diacyl-sn-glycero-3-phosphocholine = a hepta-acyl lipid A + a 2-acyl-sn-glycero-3-phosphocholine. The enzyme catalyses a lipid IVA + a 1,2-diacyl-sn-glycero-3-phosphocholine = a lipid IVB + a 2-acyl-sn-glycero-3-phosphocholine. It carries out the reaction a lipid IIA + a 1,2-diacyl-sn-glycero-3-phosphocholine = a lipid IIB + a 2-acyl-sn-glycero-3-phosphocholine. Its function is as follows. Transfers a fatty acid residue from the sn-1 position of a phospholipid to the N-linked hydroxyfatty acid chain on the proximal unit of lipid A or its precursors. In Citrobacter rodentium (strain ICC168) (Citrobacter freundii biotype 4280), this protein is Lipid A acyltransferase PagP.